A 165-amino-acid chain; its full sequence is Chorismate pyruvate-lyase (165 aa).

Substrate-binding residues include Met-35, Arg-77, Leu-115, and Glu-156.

It belongs to the UbiC family. As to quaternary structure, monomer.

It is found in the cytoplasm. It catalyses the reaction chorismate = 4-hydroxybenzoate + pyruvate. It functions in the pathway cofactor biosynthesis; ubiquinone biosynthesis. Its function is as follows. Removes the pyruvyl group from chorismate, with concomitant aromatization of the ring, to provide 4-hydroxybenzoate (4HB) for the ubiquinone pathway. The chain is Chorismate pyruvate-lyase from Shigella sonnei (strain Ss046).